The following is a 181-amino-acid chain: uncharacterized protein (181 aa).

At 1 to 14 (MQKCIMRSTEFKTH) the chain is on the cytoplasmic side. Residues 15-35 (FSFHSIFSFPLSAALLALISA) form a helical membrane-spanning segment. Over 36–58 (SEPASKAFINVQFISSPLVKKEV) the chain is Extracellular. The helical transmembrane segment at 59-79 (LPFIVSFHSLSSNGILSFSPF) threads the bilayer. At 80–84 (TSSNL) the chain is on the cytoplasmic side. A helical membrane pass occupies residues 85–105 (SIAQLPFLIKVPLLSMGSLAL). Residues 106-116 (ENFNKFIPRAD) lie on the Extracellular side of the membrane. A helical membrane pass occupies residues 117–137 (LVAAWVTIIMVFTFGNFLSTL). Residues 138–153 (SIKTGQNLWHLSKISS) lie on the Cytoplasmic side of the membrane. A helical transmembrane segment spans residues 154-174 (SVSPLLLGIILGSQSGEIMLG). Over 175-181 (KNLLITS) the chain is Extracellular.

The protein resides in the membrane. This is an uncharacterized protein from Saccharomyces cerevisiae (strain ATCC 204508 / S288c) (Baker's yeast).